The sequence spans 658 residues: MEKASGRKSLALSTAENGIENAGLELTEEGINSEQTRRMEVQGHSLSDDVRPATHQRSYLQPLTKARTFCQRHASLFKKILLGLLCLAYAAYFLAACILDFQRALALFVITCLVILVLLLHFLKKFLGKKLTRCLKPFKNSQLRLWIKRVFAGVSLVGLILWLALDTAQRPEQLISFAGICMFVLILFACSKHHSAVSWRTVFWGLGLQFVFGLLVIRTDPGFIAFQWLGDQVQIFLAYTVAGSSFVLGDTLVNDVFAFQSLPIIIFFGCVMSILYYLGLVQWVVQKIAWFLQVTMRTTATETLAVAGNIFVGMTEAPLLIRPYLADLTLSEIHAVMTSGFATISGTVLGAFISFGIDASSLISASVMGAPCALALSKLVYPEEEESKFKSKEGVKLPRGKESNVLEAASNGATDAIALVANVAANLVAFLAVLAFINAALSWLGELVDIQGLTFQVICSYILRPMVYMMGVEWTDCPMVAEMVGIKFFTNEFVAYQQLSQYKKKRLSGMEEWIDGQKQWISVRAEVITTFSLCGFANLSSIGITLGGLTSMVPHRKSDLSKVVIRALFTGSCVSFISACVAGILYVPRGAETDCVSFLSTSFTNRSYETYVCCRELFQNTYLNGTNPPSFSGAWEDKAFSAMALANCCGFYNNTVCA.

The Cytoplasmic segment spans residues Met1–Ser75. A helical transmembrane segment spans residues Leu76–Leu99. Residues Asp100–Ala104 are Extracellular-facing. A helical transmembrane segment spans residues Leu105 to Leu123. Residues Lys124–Gln142 lie on the Cytoplasmic side of the membrane. A helical membrane pass occupies residues Leu143–Trp162. At Leu163–Gln173 the chain is on the extracellular side. Residues Leu174 to Cys190 traverse the membrane as a helical segment. At Ser191–Ala196 the chain is on the cytoplasmic side. The chain crosses the membrane as a helical span at residues Val197–Ile217. Over Arg218 to Val256 the chain is Extracellular. A helical membrane pass occupies residues Phe257–Leu278. Residues Gly279–Ala289 are Cytoplasmic-facing. A helical transmembrane segment spans residues Trp290–Gly313. The Extracellular portion of the chain corresponds to Met314 to Glu332. The helical transmembrane segment at Ile333–Phe355 threads the bilayer. The Cytoplasmic portion of the chain corresponds to Gly356–Ser361. A helical transmembrane segment spans residues Leu362 to Tyr381. Residues Pro382–Ala418 are Extracellular-facing. Residues Leu419–Leu441 traverse the membrane as a helical segment. Residues Ser442–Gly452 lie on the Cytoplasmic side of the membrane. A helical membrane pass occupies residues Leu453 to Trp474. At Thr475–Thr529 the chain is on the extracellular side. The helical transmembrane segment at Thr530–Val553 threads the bilayer. Residues Pro554 to Val564 are Cytoplasmic-facing. Residues Ile565–Val587 form a helical membrane-spanning segment. Over Pro588–Ala658 the chain is Extracellular. Asn653 carries an N-linked (GlcNAc...) asparagine glycan.

The protein belongs to the concentrative nucleoside transporter (CNT) (TC 2.A.41) family. In terms of processing, N-glycosylated. N-glycosylation is required for localization to the plasma membrane and the transporter activity.

The protein localises to the cell membrane. The protein resides in the apical cell membrane. It catalyses the reaction uridine(out) + Na(+)(out) = uridine(in) + Na(+)(in). The enzyme catalyses thymidine(out) + Na(+)(out) = thymidine(in) + Na(+)(in). It carries out the reaction cytidine(out) + Na(+)(out) = cytidine(in) + Na(+)(in). The catalysed reaction is adenosine(out) + Na(+)(out) = adenosine(in) + Na(+)(in). Due to its high apparent affinity but slow transport, adenosine could act as a negative regulator of pyrimidine transport under some conditions. Functionally, sodium and pyrimidine nucleoside symporter of the plasma membrane that imports uridine, thymidine and cytidine into cells by coupling their transport to the transmembrane sodium electrochemical gradient. Also transports adenosine, an atypical substrate transported with high apparent affinity, but low maximum velocity. Therefore, exhibits the transport characteristics of the nucleoside transport system cit or N2 subtype (N2/cit). Involved in renal nucleoside (re)absorption. The chain is Sodium/nucleoside cotransporter 1 (SLC28A1) from Oryctolagus cuniculus (Rabbit).